The sequence spans 265 residues: Iron(3+)-hydroxamate import ATP-binding protein FhuC (265 aa).

The ABC transporter domain maps to 12-248 (FALRNISFRV…ETLEMIYGIP (237 aa)). ATP-binding positions include 44–51 (GHNGSGKS) and 168–179 (CLLLDEPTSALD).

This sequence belongs to the ABC transporter superfamily. Iron (Fe3+)-hydroxamate importer (TC 3.A.1.14.7) family. As to quaternary structure, the complex is composed of two ATP-binding proteins (FhuC), a transmembrane protein (FhuB) and a solute-binding protein (FhuD). FhuC interacts with FhuB.

Its subcellular location is the cell inner membrane. It catalyses the reaction ATP + H2O + Fe(3+)-hydroxamate complex-[hydroxamate-binding protein]Side 1 = ADP + phosphate + Fe(3+)-hydroxamate complexSide 2 + [hydroxamate-binding protein]Side 1.. Its activity is regulated as follows. ATPase activity is inhibited by vanadate. Functionally, part of the ABC transporter complex FhuCDB involved in iron(3+)-hydroxamate import. Responsible for energy coupling to the transport system. The protein is Iron(3+)-hydroxamate import ATP-binding protein FhuC (fhuC) of Escherichia coli (strain K12).